The following is a 692-amino-acid chain: Elongation factor G (692 aa).

In terms of domain architecture, tr-type G spans 8–282 (ENTRNIGIMA…GVVDYLPSPV (275 aa)). Residues 17–24 (AHIDAGKT), 81–85 (DTPGH), and 135–138 (NKMD) contribute to the GTP site.

It belongs to the TRAFAC class translation factor GTPase superfamily. Classic translation factor GTPase family. EF-G/EF-2 subfamily.

It is found in the cytoplasm. Catalyzes the GTP-dependent ribosomal translocation step during translation elongation. During this step, the ribosome changes from the pre-translocational (PRE) to the post-translocational (POST) state as the newly formed A-site-bound peptidyl-tRNA and P-site-bound deacylated tRNA move to the P and E sites, respectively. Catalyzes the coordinated movement of the two tRNA molecules, the mRNA and conformational changes in the ribosome. This is Elongation factor G from Geobacillus sp. (strain WCH70).